The primary structure comprises 159 residues: Major latex protein 146 (159 aa).

Belongs to the MLP family. Laticifer.

The protein localises to the vacuole. It localises to the cytoplasmic vesicle. In terms of biological role, not known; MLPs constitute up to 50% of the soluble latex protein. The sequence is that of Major latex protein 146 (MLP146) from Papaver somniferum (Opium poppy).